Reading from the N-terminus, the 635-residue chain is Ankyrin repeat and SOCS box protein 2 (635 aa).

The required for FLNA degradation stretch occupies residues 8–16 (RGSQCTIGQ). Positions 26-45 (SEDELVQMAIEQSLADKTRG) constitute a UIM domain. 12 ANK repeats span residues 104–133 (APAD…NLAE), 137–167 (EGWL…TIDQ), 171–200 (QEET…EPDI), 204–233 (SRET…DTNH), 237–266 (RGWT…KVES), 270–299 (YGIT…DINT), 303–332 (DNAS…DANK), 336–365 (DGLL…RTRI), 368–397 (SGVS…DVNT), 410–439 (RRSS…DPNR), 440–469 (DVIS…NIDA), and 476–504 (TAFP…DGEP). Serine 371 is modified (phosphoserine; by MAPK). One can recognise an SOCS box domain in the interval 586–635 (IKEKAEPPRPLAHLCRLRVRKAIGKYRIKLLDTLPLPGRLIRYLKYENTQ).

The protein belongs to the ankyrin SOCS box (ASB) family. Component of a probable ECS E3 ubiquitin-protein ligase complex which contains CUL5, either RBX1 or RNF7/RBX2, Elongin BC complex (ELOB and ELOC) and ASB2. Interacts with SKP2. Through its interaction with SKP2, likely to bridge the formation of dimeric E3-ubiquitin-protein ligase complexes composed of an ECS complex and an SCF(SKP2) complex. Interacts with JAK2; the interaction targets JAK2 for Notch-mediated proteasomal degradation. Interacts with TCF3/E2A; the interaction is mediated by SKP2 and targets TCF3 for Notch-mediated proteasomal degradation. As to quaternary structure, interacts with DES. Monoubiquitinated. In terms of processing, not monoubiquitinated. Post-translationally, phosphorylation at Ser-371 is required for association with FLNA and subsequent FLNA degradation. In terms of tissue distribution, expressed in muscle cells. As to expression, expressed in hematopoietic cells.

It is found in the cytoplasm. Its subcellular location is the cytoskeleton. It localises to the stress fiber. The protein localises to the myofibril. The protein resides in the sarcomere. It is found in the z line. It functions in the pathway protein modification; protein ubiquitination. Functionally, substrate-recognition component of a SCF-like ECS (Elongin-Cullin-SOCS-box protein) E3 ubiquitin-protein ligase complex which mediates the ubiquitination and subsequent proteasomal degradation of target proteins. Mediates Notch-induced ubiquitination and degradation of substrates including TCF3/E2A and JAK2. Required during embryonic heart development for complete heart looping. Required for cardiomyocyte differentiation. Specifically promotes the ubiquitination of SMAD9 and targets it for proteasomal degradation, leading to avoid excessive accumulation of SMAD9. Plays a role in the regulation of NK-cell migration by modulating protein levels of filamin A/FLNA via regulation of its ubiquitination and proteasome degradation. In terms of biological role, involved in myogenic differentiation and targets filamin FLNB for proteasomal degradation but not filamin FLNA. Also targets DES for proteasomal degradation. Acts as a negative regulator of skeletal muscle mass. Targets filamins FLNA and FLNB for proteasomal degradation. This leads to enhanced adhesion of hematopoietic cells to fibronectin. Required for FLNA degradation in immature cardiomyocytes which is necessary for actin cytoskeleton remodeling, leading to proper organization of myofibrils and function of mature cardiomyocytes. Required for degradation of FLNA and FLNB in immature dendritic cells (DC) which enhances immature DC migration by promoting DC podosome formation and DC-mediated degradation of the extracellular matrix. Does not promote proteasomal degradation of tyrosine-protein kinases JAK1 or JAK2 in hematopoietic cells. The polypeptide is Ankyrin repeat and SOCS box protein 2 (ASB2) (Homo sapiens (Human)).